The sequence spans 464 residues: Trigger factor (464 aa).

The PPIase FKBP-type domain maps to 162 to 243 (GDFVSIDLSA…VKSVKERELP (82 aa)). The disordered stretch occupies residues 431 to 464 (IDTSEFFGKRPSGDGAADEDADQADESTTADAGE). Residues 446–455 (AADEDADQAD) show a composition bias toward acidic residues.

It belongs to the FKBP-type PPIase family. Tig subfamily.

Its subcellular location is the cytoplasm. It carries out the reaction [protein]-peptidylproline (omega=180) = [protein]-peptidylproline (omega=0). In terms of biological role, involved in protein export. Acts as a chaperone by maintaining the newly synthesized protein in an open conformation. Functions as a peptidyl-prolyl cis-trans isomerase. This is Trigger factor from Mycobacterium avium (strain 104).